A 239-amino-acid polypeptide reads, in one-letter code: Ribonuclease PH (239 aa).

Residues arginine 86 and 124-126 (GTR) each bind phosphate.

The protein belongs to the RNase PH family. In terms of assembly, homohexameric ring arranged as a trimer of dimers.

It carries out the reaction tRNA(n+1) + phosphate = tRNA(n) + a ribonucleoside 5'-diphosphate. Phosphorolytic 3'-5' exoribonuclease that plays an important role in tRNA 3'-end maturation. Removes nucleotide residues following the 3'-CCA terminus of tRNAs; can also add nucleotides to the ends of RNA molecules by using nucleoside diphosphates as substrates, but this may not be physiologically important. Probably plays a role in initiation of 16S rRNA degradation (leading to ribosome degradation) during starvation. The polypeptide is Ribonuclease PH (Cupriavidus necator (strain ATCC 17699 / DSM 428 / KCTC 22496 / NCIMB 10442 / H16 / Stanier 337) (Ralstonia eutropha)).